We begin with the raw amino-acid sequence, 573 residues long: Isocitrate dehydrogenase kinase/phosphatase (573 aa).

ATP contacts are provided by residues 317–323 (APGVRGM) and K338. D373 is an active-site residue.

The protein belongs to the AceK family.

The protein localises to the cytoplasm. The catalysed reaction is L-seryl-[isocitrate dehydrogenase] + ATP = O-phospho-L-seryl-[isocitrate dehydrogenase] + ADP + H(+). Functionally, bifunctional enzyme which can phosphorylate or dephosphorylate isocitrate dehydrogenase (IDH) on a specific serine residue. This is a regulatory mechanism which enables bacteria to bypass the Krebs cycle via the glyoxylate shunt in response to the source of carbon. When bacteria are grown on glucose, IDH is fully active and unphosphorylated, but when grown on acetate or ethanol, the activity of IDH declines drastically concomitant with its phosphorylation. This is Isocitrate dehydrogenase kinase/phosphatase from Pseudomonas fluorescens (strain Pf0-1).